A 1388-amino-acid chain; its full sequence is Rho-associated protein kinase 2 (1388 aa).

The interval 1-26 is disordered; it reads MSRPPPTGKMPGAPEAAPGDGAGAGR. The 263-residue stretch at 92–354 folds into the Protein kinase domain; it reads YDVVKVIGRG…VEEIKQHPFF (263 aa). ATP is bound by residues 98–106 and K121; that span reads IGRGAFGEV. D214 functions as the Proton acceptor in the catalytic mechanism. The 69-residue stretch at 357–425 folds into the AGC-kinase C-terminal domain; that stretch reads DQWNWDNIRE…FRENLLLSDS (69 aa). Positions 363–784 are interaction with PPP1R12A; sequence NIRETAAPVV…LNELLKQKDV (422 aa). Positions 373 to 420 are interaction with NPM1; it reads PELSSDIDSSNFDDIEDDKGDVETFPIPKAFVGNQLPFIGFTYFRENL. T414 bears the Phosphothreonine; by ROCK2 mark. Residues 439 to 1131 are a coiled coil; that stretch reads SEESQEIQKK…QLQALHIGMD (693 aa). In terms of domain architecture, REM-1 spans 497–573; it reads TLRQLEREKA…LDEANALLRT (77 aa). The span at 512-530 shows a compositional bias: basic and acidic residues; it reads NAEYQRKADHEADKKRNLE. A disordered region spans residues 512–532; the sequence is NAEYQRKADHEADKKRNLEND. A Phosphotyrosine; by SRC modification is found at Y722. Residues 979–1047 form the RhoBD domain; the sequence is TSDVANLANE…LAEIMNRKEP (69 aa). Residues 979–1047 form an RHOA binding region; it reads TSDVANLANE…LAEIMNRKEP (69 aa). Position 1137 is a phosphoserine (S1137). Positions 1150-1349 constitute a PH domain; the sequence is ESRLEGWLSL…WVSRLVKKIP (200 aa). T1212 bears the Phosphothreonine mark. The Phorbol-ester/DAG-type zinc finger occupies 1260-1315; that stretch reads GHEFIPTLYHFPTNCEACMKPLWHMFKPPPALECRRCHIKCHKDHMDKKEEIIAPC. A disordered region spans residues 1345-1388; that stretch reads VKKIPKKPPAPDPFARSSPRTSMKIQQNQSIRRPSRQLAPNKPS. 2 positions are modified to phosphoserine: S1362 and S1374. Residues 1362–1376 show a composition bias toward polar residues; it reads SPRTSMKIQQNQSIR.

Belongs to the protein kinase superfamily. AGC Ser/Thr protein kinase family. In terms of assembly, homodimer. Interacts with IRS1. Interacts with RAF1. Interacts with RHOA (activated by GTP), RHOB and RHOC. Interacts with PPP1R12A. Interacts with EP300. Interacts with CHORDC1. Interacts with BRCA2. Interacts with NPM1; this interaction enhances ROCK2 activity. Interacts with SORL1. Interacts with PJVK. Requires Mg(2+) as cofactor. Autophosphorylated. Phosphorylation at Tyr-722 reduces its binding to RHOA and is crucial for focal adhesion dynamics. Dephosphorylation by PTPN11 stimulates its RHOA binding activity. In terms of processing, cleaved by granzyme B during apoptosis. This leads to constitutive activation of the kinase and membrane blebbing. Highly expressed in brain, heart, lung, liver, stomach, spleen, kidney, testis, muscle, embryo and placenta. Isoform 2 is expressed predominantly in the skeletal muscle.

Its subcellular location is the cytoplasm. The protein resides in the cell membrane. It localises to the nucleus. The protein localises to the cytoskeleton. It is found in the microtubule organizing center. Its subcellular location is the centrosome. It carries out the reaction L-seryl-[protein] + ATP = O-phospho-L-seryl-[protein] + ADP + H(+). It catalyses the reaction L-threonyl-[protein] + ATP = O-phospho-L-threonyl-[protein] + ADP + H(+). Its activity is regulated as follows. Activated by RHOA binding. Inhibited by Y-27632. Functionally, protein kinase which is a key regulator of actin cytoskeleton and cell polarity. Involved in regulation of smooth muscle contraction, actin cytoskeleton organization, stress fiber and focal adhesion formation, neurite retraction, cell adhesion and motility via phosphorylation of ADD1, BRCA2, CNN1, EZR, DPYSL2, EP300, MSN, MYL9/MLC2, NPM1, RDX, PPP1R12A and VIM. Phosphorylates SORL1 and IRF4. Acts as a negative regulator of VEGF-induced angiogenic endothelial cell activation. Positively regulates the activation of p42/MAPK1-p44/MAPK3 and of p90RSK/RPS6KA1 during myogenic differentiation. Plays an important role in the timely initiation of centrosome duplication. Inhibits keratinocyte terminal differentiation. May regulate closure of the eyelids and ventral body wall through organization of actomyosin bundles. Plays a critical role in the regulation of spine and synaptic properties in the hippocampus. Plays a role in placental homeostasis during the perinatal period. Plays an important role in generating the circadian rhythm of the aortic myofilament Ca(2+) sensitivity and vascular contractility by modulating the myosin light chain phosphorylation. This is Rho-associated protein kinase 2 (Rock2) from Mus musculus (Mouse).